A 289-amino-acid chain; its full sequence is GTPase Era (289 aa).

The 166-residue stretch at 2–167 (KSGFVSLIGR…LREIAKLLPE (166 aa)) folds into the Era-type G domain. The interval 10–17 (GRTNAGKS) is G1. 10–17 (GRTNAGKS) contacts GTP. The tract at residues 36 to 40 (NATRR) is G2. The tract at residues 57–60 (DTPG) is G3. Residues 57–61 (DTPGL) and 116–119 (TKTD) each bind GTP. The G4 stretch occupies residues 116 to 119 (TKTD). Residues 146–148 (VNI) are G5. Residues 186–274 (YRDFILESVY…HLNLQIFVKK (89 aa)) enclose the KH type-2 domain.

This sequence belongs to the TRAFAC class TrmE-Era-EngA-EngB-Septin-like GTPase superfamily. Era GTPase family. Monomer.

Its subcellular location is the cytoplasm. The protein resides in the cell inner membrane. Functionally, an essential GTPase that binds both GDP and GTP, with rapid nucleotide exchange. Plays a role in 16S rRNA processing and 30S ribosomal subunit biogenesis and possibly also in cell cycle regulation and energy metabolism. The polypeptide is GTPase Era (Campylobacter hominis (strain ATCC BAA-381 / DSM 21671 / CCUG 45161 / LMG 19568 / NCTC 13146 / CH001A)).